The chain runs to 125 residues: Histone H2A (125 aa).

The segment covering 1–18 (MSGRGKGGKARAKAKSRS) has biased composition (basic residues). The disordered stretch occupies residues 1-21 (MSGRGKGGKARAKAKSRSSRA). Position 2 is an N-acetylserine (Ser2). Ser2 is subject to Phosphoserine. Gln104 bears the N5-methylglutamine mark.

It belongs to the histone H2A family. As to quaternary structure, the nucleosome is a histone octamer containing two molecules each of H2A, H2B, H3 and H4 assembled in one H3-H4 heterotetramer and two H2A-H2B heterodimers. The octamer wraps approximately 147 bp of DNA.

Its subcellular location is the nucleus. The protein localises to the chromosome. Its function is as follows. Core component of nucleosome. Nucleosomes wrap and compact DNA into chromatin, limiting DNA accessibility to the cellular machineries which require DNA as a template. Histones thereby play a central role in transcription regulation, DNA repair, DNA replication and chromosomal stability. DNA accessibility is regulated via a complex set of post-translational modifications of histones, also called histone code, and nucleosome remodeling. This chain is Histone H2A, found in Asterias rubens (Common European starfish).